The sequence spans 310 residues: MKVLWAALVVTLLAGCQADVEREPEVQLGNEWAKWQAGQPWEQALGRFWNYLRWVQTLSDQVQEELLSTQATQELTVLIEETMKEVKTYKAELEQQLGPMAQETQARVSKELQAAQARLGADMEDVRNRLVQYRSELQAMMGQSTEELRGRLNSHLRKLRKRLLRDAEDLQKRLAVYQAGIREGAERSVNTLRERLGPLVEQAATVRSLVSKPLQERAEAWGQRLRGRLEKVGIQAGDRLDEVREQVQEVRAKVEEQANQMRLQAEAFHARLKSWFEPLVQDMQQRWAELVEKVQLAVGTSPTSESSEKQ.

An N-terminal signal peptide occupies residues 1–18; it reads MKVLWAALVVTLLAGCQA. 8 tandem repeats follow at residues 77–98, 99–120, 121–142, 143–164, 165–186, 187–204, 205–226, and 227–248. Positions 77 to 248 are 8 X 22 AA approximate tandem repeats; sequence VLIEETMKEV…RLDEVREQVQ (172 aa). M140 bears the Methionine sulfoxide mark. A Phosphoserine modification is found at S144. The segment at 155–165 is LDL and other lipoprotein receptors binding; that stretch reads HLRKLRKRLLR. 159 to 162 lines the heparin pocket; it reads LRKR. Positions 203–283 are lipid-binding and lipoprotein association; that stretch reads AATVRSLVSK…SWFEPLVQDM (81 aa). Residue 222-229 participates in heparin binding; it reads GQRLRGRL. The segment at 259–310 is homooligomerization; that stretch reads NQMRLQAEAFHARLKSWFEPLVQDMQQRWAELVEKVQLAVGTSPTSESSEKQ. Residues 271–283 are specificity for association with VLDL; sequence RLKSWFEPLVQDM.

Belongs to the apolipoprotein A1/A4/E family. As to quaternary structure, homotetramer. May interact with ABCA1; functionally associated with ABCA1 in the biogenesis of HDLs. May interact with APP/A4 amyloid-beta peptide; the interaction is extremely stable in vitro but its physiological significance is unclear. May interact with MAPT. May interact with MAP2. In the cerebrospinal fluid, interacts with secreted SORL1. Interacts with PMEL; this allows the loading of PMEL luminal fragment on ILVs to induce fibril nucleation. In terms of processing, APOE exists as multiple glycosylated and sialylated glycoforms within cells and in plasma. The extent of glycosylation and sialylation are tissue and context specific. Post-translationally, glycated in plasma VLDL. Phosphorylated by FAM20C in the extracellular medium.

It is found in the secreted. The protein localises to the extracellular space. It localises to the extracellular matrix. The protein resides in the extracellular vesicle. Its subcellular location is the endosome. It is found in the multivesicular body. APOE is an apolipoprotein, a protein associating with lipid particles, that mainly functions in lipoprotein-mediated lipid transport between organs via the plasma and interstitial fluids. APOE is a core component of plasma lipoproteins and is involved in their production, conversion and clearance. Apolipoproteins are amphipathic molecules that interact both with lipids of the lipoprotein particle core and the aqueous environment of the plasma. As such, APOE associates with chylomicrons, chylomicron remnants, very low density lipoproteins (VLDL) and intermediate density lipoproteins (IDL) but shows a preferential binding to high-density lipoproteins (HDL). It also binds a wide range of cellular receptors including the LDL receptor/LDLR, the LDL receptor-related proteins LRP1, LRP2 and LRP8 and the very low-density lipoprotein receptor/VLDLR that mediate the cellular uptake of the APOE-containing lipoprotein particles. Finally, APOE also has a heparin-binding activity and binds heparan-sulfate proteoglycans on the surface of cells, a property that supports the capture and the receptor-mediated uptake of APOE-containing lipoproteins by cells. A main function of APOE is to mediate lipoprotein clearance through the uptake of chylomicrons, VLDLs, and HDLs by hepatocytes. APOE is also involved in the biosynthesis by the liver of VLDLs as well as their uptake by peripheral tissues ensuring the delivery of triglycerides and energy storage in muscle, heart and adipose tissues. By participating in the lipoprotein-mediated distribution of lipids among tissues, APOE plays a critical role in plasma and tissues lipid homeostasis. APOE is also involved in two steps of reverse cholesterol transport, the HDLs-mediated transport of cholesterol from peripheral tissues to the liver, and thereby plays an important role in cholesterol homeostasis. First, it is functionally associated with ABCA1 in the biogenesis of HDLs in tissues. Second, it is enriched in circulating HDLs and mediates their uptake by hepatocytes. APOE also plays an important role in lipid transport in the central nervous system, regulating neuron survival and sprouting. This is Apolipoprotein E (APOE) from Tapirus indicus (Asiatic tapir).